Consider the following 3462-residue polypeptide: Extracellular matrix-binding protein EbhA (3462 aa).

A compositionally biased stretch (polar residues) spans 1–19 (MVQQSTTVAEAQGNEQKAN). A disordered region spans residues 1 to 21 (MVQQSTTVAEAQGNEQKANNV). FIVAR domains are found at residues 24-82 (AMDK…INQA), 150-208 (AMGN…VEQA), 276-334 (AMTQ…ITAA), 402-460 (AMTQ…IQQA), 528-586 (AMTN…VEQA), 654-712 (AMTQ…VAQA), 780-838 (AMGT…VTQA), 906-964 (AMSN…ITRA), 1032-1093 (AMDQ…ITNE), 1158-1216 (AMEL…VNGA), 1284-1342 (AMGN…VEQA), 1410-1467 (AMHG…INQA), 1535-1593 (LMDA…VSSA), 1661-1719 (AMEA…VEQL), 1787-1845 (AMQA…VEQL), 1913-1971 (AMET…VDQV), 2039-2093 (SMDQ…VDQA), 2161-2220 (AMDQ…VIKL), and 2415-2471 (AMET…INGA). A helical transmembrane segment spans residues 3267–3289 (VIKNAIGVVGISGLLASFWFFIA). The segment at 3365–3462 (RRKEDEEDVE…KKKKAKKNKK (98 aa)) is disordered. 2 stretches are compositionally biased toward basic and acidic residues: residues 3380–3390 (TDEKVLKDNEH) and 3429–3439 (QKDNQSKDKKS). Basic residues predominate over residues 3444–3462 (TSKKVAAKKKKKKAKKNKK).

The protein resides in the cell membrane. In Staphylococcus aureus (strain Newman), this protein is Extracellular matrix-binding protein EbhA (ebhA).